A 730-amino-acid chain; its full sequence is Catalase-peroxidase 1 (730 aa).

The segment at residues 92–217 (WHSAGTYRTT…LGAAVMGLIY (126 aa)) is a cross-link (tryptophyl-tyrosyl-methioninium (Trp-Tyr) (with M-243)). The active-site Proton acceptor is His-93. A cross-link (tryptophyl-tyrosyl-methioninium (Tyr-Met) (with W-92)) is located at residues 217–243 (YVDPEGPNGNPDPLASAENIRESFGRM). Heme b is bound at residue His-258.

The protein belongs to the peroxidase family. Peroxidase/catalase subfamily. In terms of assembly, homodimer or homotetramer. Heme b serves as cofactor. Formation of the three residue Trp-Tyr-Met cross-link is important for the catalase, but not the peroxidase activity of the enzyme.

It catalyses the reaction H2O2 + AH2 = A + 2 H2O. The catalysed reaction is 2 H2O2 = O2 + 2 H2O. Functionally, bifunctional enzyme with both catalase and broad-spectrum peroxidase activity. The sequence is that of Catalase-peroxidase 1 from Haloarcula marismortui (strain ATCC 43049 / DSM 3752 / JCM 8966 / VKM B-1809) (Halobacterium marismortui).